A 48-amino-acid polypeptide reads, in one-letter code: Large ribosomal subunit protein bL33A (48 aa).

This sequence belongs to the bacterial ribosomal protein bL33 family.

This Streptococcus pyogenes serotype M28 (strain MGAS6180) protein is Large ribosomal subunit protein bL33A.